We begin with the raw amino-acid sequence, 601 residues long: Phosphomethylpyrimidine synthase (601 aa).

Substrate-binding positions include Asn224, Met253, Tyr282, His318, Ser338–Gly340, Asp379–Arg382, and Glu418. Residue His422 participates in Zn(2+) binding. Position 445 (Tyr445) interacts with substrate. A Zn(2+)-binding site is contributed by His486. [4Fe-4S] cluster-binding residues include Cys566, Cys569, and Cys574.

This sequence belongs to the ThiC family. In terms of assembly, homodimer. [4Fe-4S] cluster is required as a cofactor.

The enzyme catalyses 5-amino-1-(5-phospho-beta-D-ribosyl)imidazole + S-adenosyl-L-methionine = 4-amino-2-methyl-5-(phosphooxymethyl)pyrimidine + CO + 5'-deoxyadenosine + formate + L-methionine + 3 H(+). It participates in cofactor biosynthesis; thiamine diphosphate biosynthesis. Catalyzes the synthesis of the hydroxymethylpyrimidine phosphate (HMP-P) moiety of thiamine from aminoimidazole ribotide (AIR) in a radical S-adenosyl-L-methionine (SAM)-dependent reaction. The chain is Phosphomethylpyrimidine synthase from Xylella fastidiosa (strain 9a5c).